The primary structure comprises 316 residues: MIKLGIVMDPIANINIKKDSSFAMLLEAQRRGYELHYMEMADLYLINGEARARTRTLSVEQNYDKWYEFTGEQDLPLADLDVILMRKDPPFDTEFIYATYILERAEEKGTLIVNKPQSLRDCNEKLFTAWFSDLTPETLVTRNKAQLKAFWEKHSDIILKPLDGMGGASIFRVKEGDPNLGVIAETLTEHGTRYCMAQNYLPAIKDGDKRVLVVDGEPVPYCLARIPQGGETRGNLAAGGRGEPRPLTESDWKIARQIGPTLKEKGLIFVGLDIIGDRLTEINVTSPTCIREIEAEFPVSITGMLMDAIEARLQQQ.

In terms of domain architecture, ATP-grasp spans 125-310 (KLFTAWFSDL…ITGMLMDAIE (186 aa)). Arginine 256 is a glycosylation site (N-beta-linked (GlcNAc) arginine). 2 residues coordinate Mg(2+): glutamate 281 and asparagine 283.

The protein belongs to the prokaryotic GSH synthase family. Mg(2+) is required as a cofactor. The cofactor is Mn(2+).

It carries out the reaction gamma-L-glutamyl-L-cysteine + glycine + ATP = glutathione + ADP + phosphate + H(+). It participates in sulfur metabolism; glutathione biosynthesis; glutathione from L-cysteine and L-glutamate: step 2/2. This is Glutathione synthetase from Escherichia coli O127:H6 (strain E2348/69 / EPEC).